We begin with the raw amino-acid sequence, 578 residues long: Probable arginine--tRNA ligase, mitochondrial (578 aa).

The N-terminal 16 residues, 1–16 (MACGFRRSIASQLSRV), are a transit peptide targeting the mitochondrion. L-arginine contacts are provided by residues 133-135 (SPN), His-144, Tyr-322, Asp-326, and Gln-350. The 'HIGH' region signature appears at 133–144 (SPNVAKKFHVGH). Lys-568 is modified (N6-acetyllysine).

This sequence belongs to the class-I aminoacyl-tRNA synthetase family.

It localises to the mitochondrion membrane. The enzyme catalyses tRNA(Arg) + L-arginine + ATP = L-arginyl-tRNA(Arg) + AMP + diphosphate. In terms of biological role, catalyzes the attachment of arginine to tRNA(Arg) in a two-step reaction: arginine is first activated by ATP to form Arg-AMP and then transferred to the acceptor end of tRNA(Arg). The polypeptide is Probable arginine--tRNA ligase, mitochondrial (RARS2) (Bos taurus (Bovine)).